We begin with the raw amino-acid sequence, 904 residues long: Alanine--tRNA ligase (904 aa).

Zn(2+) is bound by residues histidine 600, histidine 604, cysteine 704, and histidine 708.

This sequence belongs to the class-II aminoacyl-tRNA synthetase family. Requires Zn(2+) as cofactor.

It localises to the cytoplasm. It carries out the reaction tRNA(Ala) + L-alanine + ATP = L-alanyl-tRNA(Ala) + AMP + diphosphate. In terms of biological role, catalyzes the attachment of alanine to tRNA(Ala) in a two-step reaction: alanine is first activated by ATP to form Ala-AMP and then transferred to the acceptor end of tRNA(Ala). Also edits incorrectly charged Ser-tRNA(Ala) and Gly-tRNA(Ala) via its editing domain. This chain is Alanine--tRNA ligase, found in Metallosphaera sedula (strain ATCC 51363 / DSM 5348 / JCM 9185 / NBRC 15509 / TH2).